The following is a 347-amino-acid chain: Probable E3 ubiquitin-protein ligase DTX3 (347 aa).

The disordered stretch occupies residues Glu-113–Ala-157. Pro residues predominate over residues Gly-121 to Pro-151. The RING-type zinc-finger motif lies at Cys-164–Phe-205.

The protein belongs to the Deltex family. In terms of assembly, homodimer. May form a heterodimers with other members of the Deltex family. Interacts with NOTCH1.

It localises to the cytoplasm. The catalysed reaction is S-ubiquitinyl-[E2 ubiquitin-conjugating enzyme]-L-cysteine + [acceptor protein]-L-lysine = [E2 ubiquitin-conjugating enzyme]-L-cysteine + N(6)-ubiquitinyl-[acceptor protein]-L-lysine.. The protein operates within protein modification; protein ubiquitination. In terms of biological role, regulator of Notch signaling, a signaling pathway involved in cell-cell communications that regulates a broad spectrum of cell-fate determinations. Probably acts both as a positive and negative regulator of Notch, depending on the developmental and cell context. Functions as an ubiquitin ligase protein in vitro, suggesting that it may regulate the Notch pathway via some ubiquitin ligase activity. The chain is Probable E3 ubiquitin-protein ligase DTX3 (DTX3) from Homo sapiens (Human).